The primary structure comprises 233 residues: Large ribosomal subunit protein uL1 (233 aa).

The protein belongs to the universal ribosomal protein uL1 family. As to quaternary structure, part of the 50S ribosomal subunit.

Functionally, binds directly to 23S rRNA. The L1 stalk is quite mobile in the ribosome, and is involved in E site tRNA release. Protein L1 is also a translational repressor protein, it controls the translation of the L11 operon by binding to its mRNA. In Finegoldia magna (strain ATCC 29328 / DSM 20472 / WAL 2508) (Peptostreptococcus magnus), this protein is Large ribosomal subunit protein uL1.